Here is a 564-residue protein sequence, read N- to C-terminus: Proline--tRNA ligase (564 aa).

This sequence belongs to the class-II aminoacyl-tRNA synthetase family. ProS type 1 subfamily. As to quaternary structure, homodimer.

The protein localises to the cytoplasm. The catalysed reaction is tRNA(Pro) + L-proline + ATP = L-prolyl-tRNA(Pro) + AMP + diphosphate. Catalyzes the attachment of proline to tRNA(Pro) in a two-step reaction: proline is first activated by ATP to form Pro-AMP and then transferred to the acceptor end of tRNA(Pro). As ProRS can inadvertently accommodate and process non-cognate amino acids such as alanine and cysteine, to avoid such errors it has two additional distinct editing activities against alanine. One activity is designated as 'pretransfer' editing and involves the tRNA(Pro)-independent hydrolysis of activated Ala-AMP. The other activity is designated 'posttransfer' editing and involves deacylation of mischarged Ala-tRNA(Pro). The misacylated Cys-tRNA(Pro) is not edited by ProRS. In Thermosipho melanesiensis (strain DSM 12029 / CIP 104789 / BI429), this protein is Proline--tRNA ligase.